A 357-amino-acid polypeptide reads, in one-letter code: Dynein axonemal assembly factor 10 (357 aa).

WD repeat units follow at residues 63-105 (EKAK…VPVY), 115-154 (NTID…DPVA), 162-205 (ENKR…LRWE), 207-249 (NIKN…PTKG), 257-297 (AHKS…QRSK), and 319-357 (LSTQ…LHKI).

Component of the PAQosome complex which is responsible for the biogenesis of several protein complexes and which consists of R2TP complex members RUVBL1, RUVBL2, RPAP3 and PIH1D1, URI complex members PFDN2, PFDN6, PDRG1, UXT and URI1 as well as ASDURF, POLR2E and DNAAF10/WDR92. Interacts with PIH1D1; the interaction associates DNAAF10 with the R2TP complex. Interacts with several dynein axonemal assembly factors.

The protein resides in the dynein axonemal particle. Key assembly factor specifically required for the stability of axonemal dynein heavy chains in cytoplasm. This chain is Dynein axonemal assembly factor 10 (DNAAF10), found in Bos taurus (Bovine).